A 180-amino-acid polypeptide reads, in one-letter code: Large ribosomal subunit protein uL5 (180 aa).

This sequence belongs to the universal ribosomal protein uL5 family. As to quaternary structure, part of the 50S ribosomal subunit; part of the 5S rRNA/L5/L18/L25 subcomplex. Contacts the 5S rRNA and the P site tRNA. Forms a bridge to the 30S subunit in the 70S ribosome.

In terms of biological role, this is one of the proteins that bind and probably mediate the attachment of the 5S RNA into the large ribosomal subunit, where it forms part of the central protuberance. In the 70S ribosome it contacts protein S13 of the 30S subunit (bridge B1b), connecting the 2 subunits; this bridge is implicated in subunit movement. Contacts the P site tRNA; the 5S rRNA and some of its associated proteins might help stabilize positioning of ribosome-bound tRNAs. The sequence is that of Large ribosomal subunit protein uL5 from Clostridium tetani (strain Massachusetts / E88).